Reading from the N-terminus, the 536-residue chain is CTP synthase (536 aa).

The segment at 1 to 268 (MSFKSIFLTG…VDFLLSKFGF (268 aa)) is amidoligase domain. Position 14 (Ser14) interacts with CTP. Residue Ser14 coordinates UTP. An ATP-binding site is contributed by 15–20 (SLGKGL). Position 55 (Tyr55) interacts with L-glutamine. Asp72 is an ATP binding site. Positions 72 and 142 each coordinate Mg(2+). Residues 149-151 (DIE), 188-193 (KTKPTQ), and Lys224 contribute to the CTP site. UTP-binding positions include 188 to 193 (KTKPTQ) and Lys224. A Glutamine amidotransferase type-1 domain is found at 294–532 (RIGLVGKYLE…LSAALDYSLE (239 aa)). L-glutamine is bound at residue Gly353. The active-site Nucleophile; for glutamine hydrolysis is the Cys380. L-glutamine contacts are provided by residues 381–384 (LGMQ), Glu404, and Arg460. Active-site residues include His505 and Glu507.

The protein belongs to the CTP synthase family. As to quaternary structure, homotetramer.

It carries out the reaction UTP + L-glutamine + ATP + H2O = CTP + L-glutamate + ADP + phosphate + 2 H(+). The catalysed reaction is L-glutamine + H2O = L-glutamate + NH4(+). It catalyses the reaction UTP + NH4(+) + ATP = CTP + ADP + phosphate + 2 H(+). The protein operates within pyrimidine metabolism; CTP biosynthesis via de novo pathway; CTP from UDP: step 2/2. Allosterically activated by GTP, when glutamine is the substrate; GTP has no effect on the reaction when ammonia is the substrate. The allosteric effector GTP functions by stabilizing the protein conformation that binds the tetrahedral intermediate(s) formed during glutamine hydrolysis. Inhibited by the product CTP, via allosteric rather than competitive inhibition. Its function is as follows. Catalyzes the ATP-dependent amination of UTP to CTP with either L-glutamine or ammonia as the source of nitrogen. Regulates intracellular CTP levels through interactions with the four ribonucleotide triphosphates. In Chlamydia muridarum (strain MoPn / Nigg), this protein is CTP synthase.